The following is a 144-amino-acid chain: Large ribosomal subunit protein uL11 (144 aa).

This sequence belongs to the universal ribosomal protein uL11 family. Part of the ribosomal stalk of the 50S ribosomal subunit. Interacts with L10 and the large rRNA to form the base of the stalk. L10 forms an elongated spine to which L12 dimers bind in a sequential fashion forming a multimeric L10(L12)X complex. In terms of processing, one or more lysine residues are methylated.

Functionally, forms part of the ribosomal stalk which helps the ribosome interact with GTP-bound translation factors. The sequence is that of Large ribosomal subunit protein uL11 from Neisseria meningitidis serogroup A / serotype 4A (strain DSM 15465 / Z2491).